A 466-amino-acid polypeptide reads, in one-letter code: Argininosuccinate lyase (466 aa).

Belongs to the lyase 1 family. Argininosuccinate lyase subfamily.

The protein resides in the cytoplasm. It catalyses the reaction 2-(N(omega)-L-arginino)succinate = fumarate + L-arginine. It participates in amino-acid biosynthesis; L-arginine biosynthesis; L-arginine from L-ornithine and carbamoyl phosphate: step 3/3. In Synechococcus sp. (strain ATCC 27144 / PCC 6301 / SAUG 1402/1) (Anacystis nidulans), this protein is Argininosuccinate lyase.